The following is a 502-amino-acid chain: Lysine--tRNA ligase (502 aa).

Residues E398 and E405 each contribute to the Mg(2+) site.

The protein belongs to the class-II aminoacyl-tRNA synthetase family. In terms of assembly, homodimer. Mg(2+) serves as cofactor.

It localises to the cytoplasm. It carries out the reaction tRNA(Lys) + L-lysine + ATP = L-lysyl-tRNA(Lys) + AMP + diphosphate. In Thermosipho africanus (strain TCF52B), this protein is Lysine--tRNA ligase.